Reading from the N-terminus, the 148-residue chain is MKVIFLKDVKGKGKKGEVKNVPDGYANNFLLKQGLAAEATNSSMKTLEAQKRKEEKDAAAEVENAKELKETLEKLTVEVKAKSGEGGRLFGSITSKQIVDAMQKSHKIKLDKRKFEMDDAIRALGYTNVTVKLHPQVTATVKVHVSEQ.

The protein belongs to the bacterial ribosomal protein bL9 family.

In terms of biological role, binds to the 23S rRNA. This chain is Large ribosomal subunit protein bL9, found in Bacillus cereus (strain G9842).